Reading from the N-terminus, the 587-residue chain is Membrane protein insertase YidC (587 aa).

5 helical membrane-spanning segments follow: residues 5-25 (SVIGFSLIAVIMIVWLQFMKP), 365-385 (GLIIIIFAFLIKTVTWPLSLA), 430-450 (LGGCLPTVIQMPLLFAMFYVF), 480-500 (LPLYGDHIALMPILMAVTVFF), and 516-536 (IMIWMFPAMMLLFFNNMPSGL).

The protein belongs to the OXA1/ALB3/YidC family. Type 1 subfamily. Interacts with the Sec translocase complex via SecD. Specifically interacts with transmembrane segments of nascent integral membrane proteins during membrane integration.

Its subcellular location is the cell inner membrane. Functionally, required for the insertion and/or proper folding and/or complex formation of integral membrane proteins into the membrane. Involved in integration of membrane proteins that insert both dependently and independently of the Sec translocase complex, as well as at least some lipoproteins. Aids folding of multispanning membrane proteins. The sequence is that of Membrane protein insertase YidC from Chlorobaculum parvum (strain DSM 263 / NCIMB 8327) (Chlorobium vibrioforme subsp. thiosulfatophilum).